The sequence spans 643 residues: Threonine--tRNA ligase (643 aa).

In terms of domain architecture, TGS spans 1-65; it reads MIHITLPDGS…NKDMPLSIVT (65 aa). The tract at residues 246 to 537 is catalytic; the sequence is DHRKLGRELD…LIEQHAGAMP (292 aa). Zn(2+) is bound by residues C337, H388, and H514.

It belongs to the class-II aminoacyl-tRNA synthetase family. As to quaternary structure, homodimer. Zn(2+) serves as cofactor.

It is found in the cytoplasm. The enzyme catalyses tRNA(Thr) + L-threonine + ATP = L-threonyl-tRNA(Thr) + AMP + diphosphate + H(+). In terms of biological role, catalyzes the attachment of threonine to tRNA(Thr) in a two-step reaction: L-threonine is first activated by ATP to form Thr-AMP and then transferred to the acceptor end of tRNA(Thr). Also edits incorrectly charged L-seryl-tRNA(Thr). The polypeptide is Threonine--tRNA ligase (Delftia acidovorans (strain DSM 14801 / SPH-1)).